The chain runs to 258 residues: Phosphate import ATP-binding protein PstB (258 aa).

The region spanning 12 to 253 is the ABC transporter domain; sequence LEVKNLNFYY…PARKETEDYI (242 aa). An ATP-binding site is contributed by 44–51; that stretch reads GPSGCGKS.

Belongs to the ABC transporter superfamily. Phosphate importer (TC 3.A.1.7) family. In terms of assembly, the complex is composed of two ATP-binding proteins (PstB), two transmembrane proteins (PstC and PstA) and a solute-binding protein (PstS).

The protein resides in the cell inner membrane. The enzyme catalyses phosphate(out) + ATP + H2O = ADP + 2 phosphate(in) + H(+). Functionally, part of the ABC transporter complex PstSACB involved in phosphate import. Responsible for energy coupling to the transport system. This chain is Phosphate import ATP-binding protein PstB, found in Bordetella parapertussis (strain 12822 / ATCC BAA-587 / NCTC 13253).